We begin with the raw amino-acid sequence, 540 residues long: Transcription termination/antitermination protein NusA (540 aa).

The region spanning 144–214 (GQVIEARVED…SMWPITLSRS (71 aa)) is the S1 motif domain. The KH domain occupies 319-386 (DTSIEIVVPA…QGIFGIKKRR (68 aa)). A disordered region spans residues 457–540 (VAAPTPTPAP…KQTFDNFDDL (84 aa)). Positions 461-489 (TPTPAPQPTPAPTKVEPVPPPVSVTPKPI) are enriched in pro residues. The segment covering 512–522 (DDSKTKPEKSS) has biased composition (basic and acidic residues). Over residues 523–540 (AKTNTPQTKQTFDNFDDL) the composition is skewed to polar residues.

Belongs to the NusA family. Monomer. Binds directly to the core enzyme of the DNA-dependent RNA polymerase and to nascent RNA.

It localises to the cytoplasm. Participates in both transcription termination and antitermination. The protein is Transcription termination/antitermination protein NusA of Mycoplasma pneumoniae (strain ATCC 29342 / M129 / Subtype 1) (Mycoplasmoides pneumoniae).